A 405-amino-acid polypeptide reads, in one-letter code: Tyrosine--tRNA ligase (405 aa).

Positions 46–55 match the 'HIGH' region motif; the sequence is PTRPDIHLGH. Positions 230–234 match the 'KMSKS' region motif; the sequence is KMSKS. Residue K233 coordinates ATP. The 64-residue stretch at 341-404 folds into the S4 RNA-binding domain; that stretch reads MGLAALMVKA…GKKKFVKIVV (64 aa).

Belongs to the class-I aminoacyl-tRNA synthetase family. TyrS type 2 subfamily. Homodimer.

The protein resides in the cytoplasm. The enzyme catalyses tRNA(Tyr) + L-tyrosine + ATP = L-tyrosyl-tRNA(Tyr) + AMP + diphosphate + H(+). Catalyzes the attachment of tyrosine to tRNA(Tyr) in a two-step reaction: tyrosine is first activated by ATP to form Tyr-AMP and then transferred to the acceptor end of tRNA(Tyr). This chain is Tyrosine--tRNA ligase, found in Bdellovibrio bacteriovorus (strain ATCC 15356 / DSM 50701 / NCIMB 9529 / HD100).